A 308-amino-acid chain; its full sequence is Isoaspartyl peptidase/L-asparaginase (308 aa).

An N-acetylmethionine modification is found at Met-1. Thr-168 functions as the Nucleophile in the catalytic mechanism. Substrate-binding positions include 196–199 (RVGD) and 219–222 (TGHG).

It belongs to the Ntn-hydrolase family. In terms of assembly, heterodimer of an alpha and beta chain produced by autocleavage. This heterodimer may then dimerize in turn, giving rise to a heterotetramer. Post-translationally, cleaved into an alpha and beta chain by autocatalysis; this activates the enzyme. The N-terminal residue of the beta subunit is responsible for the nucleophile hydrolase activity.

Its subcellular location is the cytoplasm. The enzyme catalyses L-asparagine + H2O = L-aspartate + NH4(+). It carries out the reaction Cleavage of a beta-linked Asp residue from the N-terminus of a polypeptide.. Its function is as follows. Has both L-asparaginase and beta-aspartyl peptidase activity. May be involved in the production of L-aspartate, which can act as an excitatory neurotransmitter in some brain regions. Is highly active with L-Asp beta-methyl ester. Besides, has catalytic activity toward beta-aspartyl dipeptides and their methyl esters, including beta-L-Asp-L-Phe, beta-L-Asp-L-Phe methyl ester (aspartame), beta-L-Asp-L-Ala, beta-L-Asp-L-Leu and beta-L-Asp-L-Lys. Does not have aspartylglucosaminidase activity and is inactive toward GlcNAc-L-Asn. Likewise, has no activity toward glutamine. The sequence is that of Isoaspartyl peptidase/L-asparaginase (ASRGL1) from Bos taurus (Bovine).